A 362-amino-acid chain; its full sequence is Phosphoserine aminotransferase (362 aa).

Positions 9 and 42 each coordinate L-glutamate. Residues 76-77 (GR), tryptophan 102, threonine 153, aspartate 174, and glutamine 197 each bind pyridoxal 5'-phosphate. Lysine 198 is modified (N6-(pyridoxal phosphate)lysine). 239–240 (NT) provides a ligand contact to pyridoxal 5'-phosphate.

It belongs to the class-V pyridoxal-phosphate-dependent aminotransferase family. SerC subfamily. In terms of assembly, homodimer. It depends on pyridoxal 5'-phosphate as a cofactor.

Its subcellular location is the cytoplasm. The catalysed reaction is O-phospho-L-serine + 2-oxoglutarate = 3-phosphooxypyruvate + L-glutamate. It carries out the reaction 4-(phosphooxy)-L-threonine + 2-oxoglutarate = (R)-3-hydroxy-2-oxo-4-phosphooxybutanoate + L-glutamate. It participates in amino-acid biosynthesis; L-serine biosynthesis; L-serine from 3-phospho-D-glycerate: step 2/3. Its pathway is cofactor biosynthesis; pyridoxine 5'-phosphate biosynthesis; pyridoxine 5'-phosphate from D-erythrose 4-phosphate: step 3/5. Its function is as follows. Catalyzes the reversible conversion of 3-phosphohydroxypyruvate to phosphoserine and of 3-hydroxy-2-oxo-4-phosphonooxybutanoate to phosphohydroxythreonine. The sequence is that of Phosphoserine aminotransferase from Escherichia coli O157:H7.